A 291-amino-acid polypeptide reads, in one-letter code: tRNA dimethylallyltransferase (291 aa).

An ATP-binding site is contributed by 9 to 16; the sequence is GPTASGKT. Residue 11 to 16 participates in substrate binding; that stretch reads TASGKT. The interaction with substrate tRNA stretch occupies residues 34 to 37; that stretch reads DSLQ.

The protein belongs to the IPP transferase family. Monomer. Requires Mg(2+) as cofactor.

It carries out the reaction adenosine(37) in tRNA + dimethylallyl diphosphate = N(6)-dimethylallyladenosine(37) in tRNA + diphosphate. In terms of biological role, catalyzes the transfer of a dimethylallyl group onto the adenine at position 37 in tRNAs that read codons beginning with uridine, leading to the formation of N6-(dimethylallyl)adenosine (i(6)A). The polypeptide is tRNA dimethylallyltransferase (Aster yellows witches'-broom phytoplasma (strain AYWB)).